Reading from the N-terminus, the 229-residue chain is Aquaporin Z (229 aa).

Helical transmembrane passes span 8–28 (FLGT…AAGF) and 33–53 (IGFA…AYAI). Residues 62 to 64 (NPA) carry the NPA 1 motif. 3 helical membrane-spanning segments follow: residues 88–108 (VLGA…GAGF), 129–149 (LLAA…VIMG), and 158–178 (GFAP…SIPV). Residues 184-186 (NPA) carry the NPA 2 motif. A helical membrane pass occupies residues 192-212 (ALFVGGWAVQQLWLFWLAPII).

This sequence belongs to the MIP/aquaporin (TC 1.A.8) family. In terms of assembly, homotetramer.

The protein resides in the cell inner membrane. The enzyme catalyses H2O(in) = H2O(out). Functionally, channel that permits osmotically driven movement of water in both directions. It is involved in the osmoregulation and in the maintenance of cell turgor during volume expansion in rapidly growing cells. It mediates rapid entry or exit of water in response to abrupt changes in osmolarity. This Chromobacterium violaceum (strain ATCC 12472 / DSM 30191 / JCM 1249 / CCUG 213 / NBRC 12614 / NCIMB 9131 / NCTC 9757 / MK) protein is Aquaporin Z.